A 69-amino-acid polypeptide reads, in one-letter code: DNA gyrase inhibitor YacG (69 aa).

Positions 12, 15, 31, and 35 each coordinate Zn(2+). Residues 49 to 69 (RVPVEPKPDEGETPDQAERPQ) form a disordered region.

It belongs to the DNA gyrase inhibitor YacG family. In terms of assembly, interacts with GyrB. It depends on Zn(2+) as a cofactor.

Its function is as follows. Inhibits all the catalytic activities of DNA gyrase by preventing its interaction with DNA. Acts by binding directly to the C-terminal domain of GyrB, which probably disrupts DNA binding by the gyrase. In Thiobacillus denitrificans (strain ATCC 25259 / T1), this protein is DNA gyrase inhibitor YacG.